The chain runs to 88 residues: Small ribosomal subunit protein bS20 (88 aa).

The protein belongs to the bacterial ribosomal protein bS20 family.

Functionally, binds directly to 16S ribosomal RNA. In Micrococcus luteus (strain ATCC 4698 / DSM 20030 / JCM 1464 / CCM 169 / CCUG 5858 / IAM 1056 / NBRC 3333 / NCIMB 9278 / NCTC 2665 / VKM Ac-2230) (Micrococcus lysodeikticus), this protein is Small ribosomal subunit protein bS20.